A 264-amino-acid chain; its full sequence is MKKLKLHGFNNLTKSLSFCIYDICYAKTAEERDGYIAYIDELYNANRLTEILSETCSIIGANILNIARQDYEPQGASVTILVSEEPVDPKLIDQTEHPGPLPETVVAHLDKSHICVHTYPESHPEGGLCTFRADIEVSTCGVISPLKALNYLIHQLESDIVTIDYRVRGFTRDVNGMKHFIDHEINSIQNFMSEDMKSLYDMVDVNVYQENIFHTKMLLKEFDLKHYMFHTKPEDLTETERQEITAALWKEMREIYYGRNISAV.

The Schiff-base intermediate with substrate; via pyruvic acid role is filled by serine 112. At serine 112 the chain carries Pyruvic acid (Ser); by autocatalysis. Histidine 117 functions as the Proton acceptor; for processing activity in the catalytic mechanism. Cysteine 140 acts as the Proton donor; for catalytic activity in catalysis.

Belongs to the prokaryotic AdoMetDC family. Type 2 subfamily. In terms of assembly, heterooctamer of four alpha and four beta chains arranged as a tetramer of alpha/beta heterodimers. It depends on pyruvate as a cofactor. In terms of processing, is synthesized initially as an inactive proenzyme. Formation of the active enzyme involves a self-maturation process in which the active site pyruvoyl group is generated from an internal serine residue via an autocatalytic post-translational modification. Two non-identical subunits are generated from the proenzyme in this reaction, and the pyruvate is formed at the N-terminus of the alpha chain, which is derived from the carboxyl end of the proenzyme. The post-translation cleavage follows an unusual pathway, termed non-hydrolytic serinolysis, in which the side chain hydroxyl group of the serine supplies its oxygen atom to form the C-terminus of the beta chain, while the remainder of the serine residue undergoes an oxidative deamination to produce ammonia and the pyruvoyl group blocking the N-terminus of the alpha chain.

It catalyses the reaction S-adenosyl-L-methionine + H(+) = S-adenosyl 3-(methylsulfanyl)propylamine + CO2. It participates in amine and polyamine biosynthesis; S-adenosylmethioninamine biosynthesis; S-adenosylmethioninamine from S-adenosyl-L-methionine: step 1/1. Its function is as follows. Catalyzes the decarboxylation of S-adenosylmethionine to S-adenosylmethioninamine (dcAdoMet), the propylamine donor required for the synthesis of the polyamines spermine and spermidine from the diamine putrescine. This chain is S-adenosylmethionine decarboxylase proenzyme, found in Salmonella gallinarum (strain 287/91 / NCTC 13346).